The sequence spans 338 residues: MVVKVGINGFGRIGRIVFRNAVEHDDVEIVAVNDPFIETKYAAYMLKYDSTHGQFKGDIQHSSSNNLTVNNKTIHFYQERDPANIPWGKHGVDYVVESTGVFTTTEKAKAHLSGGAKKVIISAPSADAPMFVMGVNEKSYRPDISVLSNASCTTNCLAPLAKVIHDNFGIAEGLMTTIHSYTATQKTVDGPSHKDWRGGRTAAQNIIPSSTGAAKAVGKVIPALNGKLTGMAMRVPTANVSVVDLTCRTEKPVTYDQIKAAVKAASEGELKGILGYSEDALVSTDLNGDPRSSIFDASAGIALNDRFVKLISWYDNEWGYSRRVLDLIAYIAKVDAGK.

NAD(+)-binding positions include 12–13 (RI), D34, and R80. Residues 151-153 (SCT), T182, 211-212 (TG), and R234 contribute to the D-glyceraldehyde 3-phosphate site. Residue C152 is the Nucleophile of the active site. N316 contributes to the NAD(+) binding site.

The protein belongs to the glyceraldehyde-3-phosphate dehydrogenase family. As to quaternary structure, homotetramer.

Its subcellular location is the cytoplasm. It carries out the reaction D-glyceraldehyde 3-phosphate + phosphate + NAD(+) = (2R)-3-phospho-glyceroyl phosphate + NADH + H(+). It functions in the pathway carbohydrate degradation; glycolysis; pyruvate from D-glyceraldehyde 3-phosphate: step 1/5. This Paracoccidioides lutzii (strain ATCC MYA-826 / Pb01) (Paracoccidioides brasiliensis) protein is Glyceraldehyde-3-phosphate dehydrogenase (GPD).